The sequence spans 325 residues: G/U mismatch-specific uracil DNA glycosylase (325 aa).

Over residues 1-11 (MNDIETRDTGT) the composition is skewed to basic and acidic residues. Residues 1 to 50 (MNDIETRDTGTKNDNSSEFNLSVKSHKRKRSFDDENLELEESREETSGGI) are disordered. Over residues 12–23 (KNDNSSEFNLSV) the composition is skewed to polar residues. Residues 34–43 (DENLELEESR) show a composition bias toward acidic residues.

Belongs to the uracil-DNA glycosylase (UDG) superfamily. TDG/mug family.

It localises to the nucleus. It catalyses the reaction Specifically hydrolyzes mismatched double-stranded DNA and polynucleotides, releasing free uracil.. Removes uracil from G/U mispairs in ssDNA. Also corrects G/G mispairs. Does not catalyze the removal of thymine from G/T mispairs. In Schizosaccharomyces pombe (strain 972 / ATCC 24843) (Fission yeast), this protein is G/U mismatch-specific uracil DNA glycosylase (thp1).